The following is a 956-amino-acid chain: Translation initiation factor IF-2 (956 aa).

The tract at residues 50-351 (FPADSGGAAN…APSIGGVQVP (302 aa)) is disordered. A compositionally biased stretch (pro residues) spans 64-95 (APKPARAPKPAPKAAPAPPVEEAPAEPAPPAA). 2 stretches are compositionally biased toward low complexity: residues 96–107 (PEVVAAPEAPVA) and 121–136 (PEAP…ARPA). Basic and acidic residues predominate over residues 146 to 155 (AAEKPADTRT). Gly residues-rich tracts occupy residues 171 to 192 (RPGG…GGPR) and 206 to 234 (RPGG…GQGG). The span at 235-254 (SRPSPGMMPGRSAVGRPGAP) shows a compositional bias: low complexity. A compositionally biased stretch (gly residues) spans 255–320 (ARGGSGGPGG…GTQGAFGRAG (66 aa)). A compositionally biased stretch (basic residues) spans 324–333 (VRARKSRRAK). One can recognise a tr-type G domain in the interval 448 to 619 (ARPPVVTVMG…AVLLTADAAL (172 aa)). Residues 457 to 464 (GHVDHGKT) form a G1 region. 457-464 (GHVDHGKT) is a GTP binding site. The tract at residues 482-486 (GITQH) is G2. The G3 stretch occupies residues 507–510 (DTPG). GTP is bound by residues 507 to 511 (DTPGH) and 561 to 564 (NKVD). Residues 561–564 (NKVD) are G4. The interval 597 to 599 (SAK) is G5.

This sequence belongs to the TRAFAC class translation factor GTPase superfamily. Classic translation factor GTPase family. IF-2 subfamily.

It localises to the cytoplasm. Functionally, one of the essential components for the initiation of protein synthesis. Protects formylmethionyl-tRNA from spontaneous hydrolysis and promotes its binding to the 30S ribosomal subunits. Also involved in the hydrolysis of GTP during the formation of the 70S ribosomal complex. The polypeptide is Translation initiation factor IF-2 (Beutenbergia cavernae (strain ATCC BAA-8 / DSM 12333 / CCUG 43141 / JCM 11478 / NBRC 16432 / NCIMB 13614 / HKI 0122)).